The primary structure comprises 539 residues: MYGGDEFSNNGDFYDDYAHTGDPQLDLEYERSYYTSRMPDNVKYFLMNFCQAIKDGNLYDIQNMYENTFPQISDHHFDKTAWPEEQEVASIVDNEKVFLILYKELYFRHIHARIPGGPKLDQRINSFFNYCDFFNLIISAQNPVMLELPDIWLWELVDEFVYQFQNFAQYRARLTDKSQDEIQQLCVNHSNVWSILCILNVLHSLVDISNIKKQLEVISQGVDPQTVAGDFGKLSFYKMLGYFSLVGLLRVHSLLGDYYQAIKVLEPIEIHKKSAYSHIPACQISTSYYVGFAYMMMRRYADAIRTFSDILLYVQRTKQLYSTRSYQNDQINKQAEQMYHLLAICLVLHPQCIDESIQQVLREKNYHDAMFKMQCGDLDVFKSFFIFACPRFVSPCPPAADAPMEDYVKDPMEHQLLVFMDEVRQQKDLPTTRSYLKLYTTLPLAKLASFIDPNASEDDVSKLLIRLLCFKHKMRNLVWSKGPSGLEGSFKSGSELDFYIDDDMIHIADTKVSHRYGDFFVRKILKFNDLNRKLKGVNI.

The region spanning 306–514 (TFSDILLYVQ…IHIADTKVSH (209 aa)) is the PCI domain.

This sequence belongs to the eIF-3 subunit L family. Component of the eukaryotic translation initiation factor 3 (eIF-3) complex. The eIF-3 complex interacts with pix.

Its subcellular location is the cytoplasm. Its function is as follows. Component of the eukaryotic translation initiation factor 3 (eIF-3) complex, which is involved in protein synthesis of a specialized repertoire of mRNAs and, together with other initiation factors, stimulates binding of mRNA and methionyl-tRNAi to the 40S ribosome. The eIF-3 complex specifically targets and initiates translation of a subset of mRNAs involved in cell proliferation. In Drosophila willistoni (Fruit fly), this protein is Eukaryotic translation initiation factor 3 subunit L.